Here is a 203-residue protein sequence, read N- to C-terminus: Outer-membrane lipoprotein carrier protein (203 aa).

The first 21 residues, 1–21, serve as a signal peptide directing secretion; it reads MKKLLVACCLLSGFASTSVLA.

Belongs to the LolA family. In terms of assembly, monomer.

Its subcellular location is the periplasm. In terms of biological role, participates in the translocation of lipoproteins from the inner membrane to the outer membrane. Only forms a complex with a lipoprotein if the residue after the N-terminal Cys is not an aspartate (The Asp acts as a targeting signal to indicate that the lipoprotein should stay in the inner membrane). The protein is Outer-membrane lipoprotein carrier protein of Serratia proteamaculans (strain 568).